The primary structure comprises 436 residues: Adenosylmethionine-8-amino-7-oxononanoate aminotransferase (436 aa).

Trp56 is a binding site for substrate. Gly114–Ser115 lines the pyridoxal 5'-phosphate pocket. Residue Tyr148 participates in substrate binding. A pyridoxal 5'-phosphate-binding site is contributed by Asp245. Residues Lys274, Ser309, and Arg400 each contribute to the substrate site. The residue at position 274 (Lys274) is an N6-(pyridoxal phosphate)lysine.

This sequence belongs to the class-III pyridoxal-phosphate-dependent aminotransferase family. BioA subfamily. Homodimer. Requires pyridoxal 5'-phosphate as cofactor.

It localises to the cytoplasm. The catalysed reaction is (8S)-8-amino-7-oxononanoate + S-adenosyl-L-methionine = S-adenosyl-4-methylsulfanyl-2-oxobutanoate + (7R,8S)-7,8-diammoniononanoate. It participates in cofactor biosynthesis; biotin biosynthesis; 7,8-diaminononanoate from 8-amino-7-oxononanoate (SAM route): step 1/1. In terms of biological role, catalyzes the transfer of the alpha-amino group from S-adenosyl-L-methionine (SAM) to 7-keto-8-aminopelargonic acid (KAPA) to form 7,8-diaminopelargonic acid (DAPA). It is the only aminotransferase known to utilize SAM as an amino donor. The chain is Adenosylmethionine-8-amino-7-oxononanoate aminotransferase from Helicobacter pylori (strain ATCC 700392 / 26695) (Campylobacter pylori).